We begin with the raw amino-acid sequence, 99 residues long: Small ribosomal subunit protein bS6 (99 aa).

This sequence belongs to the bacterial ribosomal protein bS6 family.

Binds together with bS18 to 16S ribosomal RNA. The polypeptide is Small ribosomal subunit protein bS6 (Lactiplantibacillus plantarum (strain ATCC BAA-793 / NCIMB 8826 / WCFS1) (Lactobacillus plantarum)).